Reading from the N-terminus, the 281-residue chain is Undecaprenyl-diphosphatase (281 aa).

7 consecutive transmembrane segments (helical) span residues 45-65 (AFTNMFNVVIQLGAILAVVVI), 86-106 (WQLWAKVILSALPAAVIGLIF), 114-134 (FQNFFSVALMLILYGIAFIYV), 148-168 (LVSLPYKTAFFIGLFQVLSLI), 196-216 (FFLGIPIMFGASLVKVLKFIV), 224-244 (SQLFILLVAMLVAFAVSLYVI), and 256-276 (FTFFGKYRIGLGILLLFYGLM).

This sequence belongs to the UppP family.

The protein localises to the cell membrane. The enzyme catalyses di-trans,octa-cis-undecaprenyl diphosphate + H2O = di-trans,octa-cis-undecaprenyl phosphate + phosphate + H(+). Functionally, catalyzes the dephosphorylation of undecaprenyl diphosphate (UPP). Confers resistance to bacitracin. The polypeptide is Undecaprenyl-diphosphatase (Streptococcus mutans serotype c (strain ATCC 700610 / UA159)).